Here is a 220-residue protein sequence, read N- to C-terminus: UPF0319 protein YccT (220 aa).

A signal peptide spans 1 to 20 (MKTGALTTFLALCLPVTVFA).

It belongs to the UPF0319 family.

The polypeptide is UPF0319 protein YccT (Salmonella schwarzengrund (strain CVM19633)).